We begin with the raw amino-acid sequence, 296 residues long: Acetyl-coenzyme A carboxylase carboxyl transferase subunit beta (296 aa).

A CoA carboxyltransferase N-terminal domain is found at 26 to 295; that stretch reads VWTKCTNCEQ…PFKVGELIIE (270 aa). 4 residues coordinate Zn(2+): cysteine 30, cysteine 33, cysteine 49, and cysteine 52. A C4-type zinc finger spans residues 30–52; sequence CTNCEQVLYSEELKRNMQVCPKC.

It belongs to the AccD/PCCB family. In terms of assembly, acetyl-CoA carboxylase is a heterohexamer composed of biotin carboxyl carrier protein (AccB), biotin carboxylase (AccC) and two subunits each of ACCase subunit alpha (AccA) and ACCase subunit beta (AccD). The cofactor is Zn(2+).

It localises to the cytoplasm. It carries out the reaction N(6)-carboxybiotinyl-L-lysyl-[protein] + acetyl-CoA = N(6)-biotinyl-L-lysyl-[protein] + malonyl-CoA. The protein operates within lipid metabolism; malonyl-CoA biosynthesis; malonyl-CoA from acetyl-CoA: step 1/1. Functionally, component of the acetyl coenzyme A carboxylase (ACC) complex. Biotin carboxylase (BC) catalyzes the carboxylation of biotin on its carrier protein (BCCP) and then the CO(2) group is transferred by the transcarboxylase to acetyl-CoA to form malonyl-CoA. The protein is Acetyl-coenzyme A carboxylase carboxyl transferase subunit beta of Haemophilus ducreyi (strain 35000HP / ATCC 700724).